Reading from the N-terminus, the 325-residue chain is GMP reductase (325 aa).

Residue Cys-174 is the Thioimidate intermediate of the active site. 203–226 (LIADGGIRTHGDIAKSIRFGASMV) is a binding site for NADP(+).

Belongs to the IMPDH/GMPR family. GuaC type 2 subfamily.

It carries out the reaction IMP + NH4(+) + NADP(+) = GMP + NADPH + 2 H(+). Catalyzes the irreversible NADPH-dependent deamination of GMP to IMP. It functions in the conversion of nucleobase, nucleoside and nucleotide derivatives of G to A nucleotides, and in maintaining the intracellular balance of A and G nucleotides. This chain is GMP reductase, found in Staphylococcus aureus (strain MRSA252).